Consider the following 383-residue polypeptide: F-box/kelch-repeat protein At1g16250 (383 aa).

Residues 7–54 form the F-box domain; sequence SIIPGLPDDLALRCIAKLSHGYHGVLECVSRGWRDLVRGADYSCYKAR. Kelch repeat units lie at residues 50–103, 109–165, 166–214, 216–263, and 318–377; these read CYKA…GFAC, CLLV…SVSG, KVYV…SYRG, FHVL…VMKN, and ELYV…CVSL.

The chain is F-box/kelch-repeat protein At1g16250 from Arabidopsis thaliana (Mouse-ear cress).